Reading from the N-terminus, the 442-residue chain is Enolase 1 (442 aa).

The tract at residues 73-140 (KLIAKEIVGY…YNYLGGFNAH (68 aa)) is binds human collagen. Position 163 (Gln163) interacts with (2R)-2-phosphoglycerate. The Proton donor role is filled by Glu205. The Mg(2+) site is built by Asp242, Glu290, and Asp317. 4 residues coordinate (2R)-2-phosphoglycerate: Lys342, Arg371, Ser372, and Lys393. The Proton acceptor role is filled by Lys342.

This sequence belongs to the enolase family. Mg(2+) serves as cofactor.

It is found in the cytoplasm. The protein resides in the secreted. It localises to the cell surface. It catalyses the reaction (2R)-2-phosphoglycerate = phosphoenolpyruvate + H2O. Its pathway is carbohydrate degradation; glycolysis; pyruvate from D-glyceraldehyde 3-phosphate: step 4/5. Catalyzes the reversible conversion of 2-phosphoglycerate (2-PG) into phosphoenolpyruvate (PEP). It is essential for the degradation of carbohydrates via glycolysis. Functionally, 'Moonlights' as a collagen receptor. Binds host (human) collagen, which may contribute to pathogenicity. This chain is Enolase 1, found in Lactiplantibacillus plantarum (strain ATCC BAA-793 / NCIMB 8826 / WCFS1) (Lactobacillus plantarum).